Reading from the N-terminus, the 87-residue chain is UPF0250 protein YbeD (87 aa).

The protein belongs to the UPF0250 family.

This Shigella boydii serotype 18 (strain CDC 3083-94 / BS512) protein is UPF0250 protein YbeD.